Reading from the N-terminus, the 327-residue chain is MVRCDRGLQMLLTTAGAFAAFSLMAIAIGTDYWLYSSAHICNGTNLTMDDGPPPRRARGDLTHSGLWRVCCIEGIYKGHCFRINHFPEDNDYDHDSSEYLLRIVRASSVFPILSTILLLLGGLCIGAGRIYSRKNNIVLSAGILFVAAGLSNIIGIIVYISSNTGDPSDKRDEDKKNHYNYGWSFYFGALSFIVAETVGVLAVNIYIEKNKELRFKTKREFLKASSSSPYARMPSYRYRRRRSRSSSRSTEASPSRDVSPMGLKITGAIPMGELSMYTLSREPLKVTTAASYSPDQEASFLQVHDFFQQDLKEGFHVSMLNRRTTPV.

Residues 1–9 are Cytoplasmic-facing; that stretch reads MVRCDRGLQ. Residues 10 to 30 form a helical membrane-spanning segment; it reads MLLTTAGAFAAFSLMAIAIGT. Over 31 to 107 the chain is Extracellular; it reads DYWLYSSAHI…EYLLRIVRAS (77 aa). N-linked (GlcNAc...) asparagine glycosylation is found at N42 and N45. A helical transmembrane segment spans residues 108–128; sequence SVFPILSTILLLLGGLCIGAG. At 129 to 136 the chain is on the cytoplasmic side; sequence RIYSRKNN. The helical transmembrane segment at 137 to 157 threads the bilayer; it reads IVLSAGILFVAAGLSNIIGII. The Extracellular portion of the chain corresponds to 158–186; sequence VYISSNTGDPSDKRDEDKKNHYNYGWSFY. The chain crosses the membrane as a helical span at residues 187–207; it reads FGALSFIVAETVGVLAVNIYI. Topologically, residues 208–327 are cytoplasmic; the sequence is EKNKELRFKT…SMLNRRTTPV (120 aa). Residues 235-261 form a disordered region; sequence SYRYRRRRSRSSSRSTEASPSRDVSPM. The span at 246–256 shows a compositional bias: low complexity; sequence SSRSTEASPSR. Phosphoserine is present on S259.

The protein belongs to the PMP-22/EMP/MP20 family. CACNG subfamily. In terms of assembly, interacts with CACNA1C. Identified in a complex with the L-type calcium channel subunits CACNA1C, CACNA2D1 and either CACNB1 or CACNB2. Acts as an auxiliary subunit for AMPA-selective glutamate receptors (AMPARs). Interacts with GRIA1. In terms of tissue distribution, detected in heart left ventricle.

It localises to the cell membrane. Regulates the activity of L-type calcium channels that contain CACNA1C as pore-forming subunit. Regulates the trafficking and gating properties of AMPA-selective glutamate receptors (AMPARs), including GRIA1 and GRIA4. Promotes their targeting to the cell membrane and synapses and modulates their gating properties by slowing their rates of activation, deactivation and desensitization and by mediating their resensitization. The chain is Voltage-dependent calcium channel gamma-4 subunit (CACNG4) from Homo sapiens (Human).